Here is a 537-residue protein sequence, read N- to C-terminus: Glucans biosynthesis protein D (537 aa).

A signal peptide (tat-type signal) is located at residues 1-30 (MLMYRRDFLKSVTAAWVAFGLPNPLGGAFA).

Belongs to the OpgD/OpgG family. In terms of processing, predicted to be exported by the Tat system. The position of the signal peptide cleavage has not been experimentally proven.

It is found in the periplasm. It participates in glycan metabolism; osmoregulated periplasmic glucan (OPG) biosynthesis. Probably involved in the control of the structural glucose backbone of osmoregulated periplasmic glucans (OPGs). The chain is Glucans biosynthesis protein D from Xylella fastidiosa (strain M12).